The following is a 388-amino-acid chain: Chorismate synthase (388 aa).

NADP(+)-binding residues include Arg39 and Arg45. Residues 130-132, 251-252, Ala296, 311-315, and Arg337 contribute to the FMN site; these read RSS, NA, and KPIPT.

It belongs to the chorismate synthase family. As to quaternary structure, homotetramer. Requires FMNH2 as cofactor.

The catalysed reaction is 5-O-(1-carboxyvinyl)-3-phosphoshikimate = chorismate + phosphate. The protein operates within metabolic intermediate biosynthesis; chorismate biosynthesis; chorismate from D-erythrose 4-phosphate and phosphoenolpyruvate: step 7/7. Catalyzes the anti-1,4-elimination of the C-3 phosphate and the C-6 proR hydrogen from 5-enolpyruvylshikimate-3-phosphate (EPSP) to yield chorismate, which is the branch point compound that serves as the starting substrate for the three terminal pathways of aromatic amino acid biosynthesis. This reaction introduces a second double bond into the aromatic ring system. The protein is Chorismate synthase of Streptococcus equi subsp. equi (strain 4047).